Consider the following 418-residue polypeptide: MHLSDLKHLHVSELVEMAISNEIDGANRLRKQDLIFALLKNQAKKGESIFGEGTLEVLPDGFGFLRSPDTSYLAGPDDIYVSPSQIRRFNLHTGDSIEGEIRTPKDGERYFALVKVDKVNGEAPENSKHKILFENLTPLFPTEQFKLEREIRAEENITGRIIDLISPIGKGQRALLVAPPKSGKTVMLQHIAHAITANHPEAVLIVLLIDERPEEVTEMQRSVRGEVVSSTFDEPATRHVQVAEMVIEKAKRLVEHKKDVVILLDSITRLARAYNTVVPASGKVLTGGVDANALQRPKRFFGAARNVEEGGSLTIVATALIDTGSRMDDVIYEEFKGTGNSEIHLDRRMAEKRIFPALNINRSGTRREELLVPQDQLQRIWVLRKLLYPMDDLEAMEFLQDKIKATKSNQAFFDSMRR.

The Rho RNA-BD domain occupies 48–123 (SIFGEGTLEV…VKVDKVNGEA (76 aa)). ATP is bound by residues 169–174 (GKGQRA), 181–186 (KSGKTV), and Arg-212.

It belongs to the Rho family. As to quaternary structure, homohexamer. The homohexamer assembles into an open ring structure.

Its function is as follows. Facilitates transcription termination by a mechanism that involves Rho binding to the nascent RNA, activation of Rho's RNA-dependent ATPase activity, and release of the mRNA from the DNA template. The protein is Transcription termination factor Rho of Chromobacterium violaceum (strain ATCC 12472 / DSM 30191 / JCM 1249 / CCUG 213 / NBRC 12614 / NCIMB 9131 / NCTC 9757 / MK).